A 147-amino-acid chain; its full sequence is UPF0306 protein YhbP (147 aa).

Belongs to the UPF0306 family.

The chain is UPF0306 protein YhbP from Shigella sonnei (strain Ss046).